A 69-amino-acid chain; its full sequence is Intrepicalcin (69 aa).

An N-terminal signal peptide occupies residues 1–27 (MRQNTMTIIFIVFIVTFASLTIYGAEA). Positions 28-36 (SEANFLERR) are excised as a propeptide. 3 cysteine pairs are disulfide-bonded: C39–C53, C46–C57, and C52–C68. The essential for stimulation of [3H]ryanodine binding to RYR1 stretch occupies residues 59–60 (RR).

This sequence belongs to the scorpion calcin family. Expressed by the venom gland.

It localises to the secreted. This toxin stabilizes ryanodine receptor 1 (RyR1) opening in a long-lasting subconductance state (55% of the full conductance state). Furthermore, it triggers calcium release from sarcoplasmic vesicles (45.3 nM are enough to induce a sharp release, and 50% of the total calcium is released after toxin (100 nM) addition) probably by acting as a cell-penetrating peptide (CPP). In addition, it has been shown to dose-dependently stimulate ryanodine binding to RyR1 (EC(50)=17.4 nM). It also augments the bell-shaped calcium-[3H]ryanodine binding curve that is maximal at about 10 uM calcium concentration. It binds a different site as ryanodine. It acts synergistically with caffeine. In vivo, intracerebroventricular injection into mice induces neurotoxic symptoms, followed by death. This chain is Intrepicalcin, found in Thorellius intrepidus (Scorpion).